Here is a 242-residue protein sequence, read N- to C-terminus: Small ribosomal subunit protein uS2 (242 aa).

This sequence belongs to the universal ribosomal protein uS2 family.

The polypeptide is Small ribosomal subunit protein uS2 (Shewanella piezotolerans (strain WP3 / JCM 13877)).